The sequence spans 471 residues: Glutamate--tRNA ligase (471 aa).

Positions P9–G19 match the 'HIGH' region motif. 4 residues coordinate Zn(2+): C98, C100, C125, and H127. The 'KMSKS' region signature appears at K237–R241. K240 is a binding site for ATP.

This sequence belongs to the class-I aminoacyl-tRNA synthetase family. Glutamate--tRNA ligase type 1 subfamily. As to quaternary structure, monomer. Zn(2+) serves as cofactor.

The protein resides in the cytoplasm. It carries out the reaction tRNA(Glu) + L-glutamate + ATP = L-glutamyl-tRNA(Glu) + AMP + diphosphate. Functionally, catalyzes the attachment of glutamate to tRNA(Glu) in a two-step reaction: glutamate is first activated by ATP to form Glu-AMP and then transferred to the acceptor end of tRNA(Glu). The chain is Glutamate--tRNA ligase from Salmonella enteritidis PT4 (strain P125109).